Reading from the N-terminus, the 128-residue chain is Nucleoside diphosphate kinase B (128 aa).

At Met-1 the chain carries N-acetylmethionine. ATP contacts are provided by Lys-9, Phe-39, Thr-70, Arg-81, and Asn-91. The active-site Pros-phosphohistidine intermediate is His-94.

Belongs to the NDK family. The cofactor is Mg(2+).

It is found in the cytoplasm. It localises to the nucleus. The protein localises to the cell projection. The protein resides in the lamellipodium. Its subcellular location is the ruffle. The enzyme catalyses a 2'-deoxyribonucleoside 5'-diphosphate + ATP = a 2'-deoxyribonucleoside 5'-triphosphate + ADP. The catalysed reaction is a ribonucleoside 5'-diphosphate + ATP = a ribonucleoside 5'-triphosphate + ADP. In terms of biological role, major role in the synthesis of nucleoside triphosphates other than ATP. This Merluccius bilinearis (Silver hake) protein is Nucleoside diphosphate kinase B (nme2).